A 158-amino-acid chain; its full sequence is MFRIGQGFDVHEFAEGRPLIIGGITIPHEKGLIGHSDADVLLHTIADACLGAIAAGDIGKHFPDTDPAFKDADSAVLLQKVWGFVREQGYELGNLDCTIIAQKPKMAPHIESMRKRISELLETSIDNINVKATTTEKLGFTGREEGIASQAVVLLQKK.

Residues Asp-9 and His-11 each coordinate a divalent metal cation. Residues 9-11 (DVH) and 35-36 (HS) contribute to the 4-CDP-2-C-methyl-D-erythritol 2-phosphate site. His-43 serves as a coordination point for a divalent metal cation. Residues 57–59 (DIG), 62–66 (FPDTD), 101–107 (AQKPKMA), 133–136 (TTTE), Phe-140, and Arg-143 contribute to the 4-CDP-2-C-methyl-D-erythritol 2-phosphate site.

This sequence belongs to the IspF family. In terms of assembly, homotrimer. A divalent metal cation is required as a cofactor.

It carries out the reaction 4-CDP-2-C-methyl-D-erythritol 2-phosphate = 2-C-methyl-D-erythritol 2,4-cyclic diphosphate + CMP. Its pathway is isoprenoid biosynthesis; isopentenyl diphosphate biosynthesis via DXP pathway; isopentenyl diphosphate from 1-deoxy-D-xylulose 5-phosphate: step 4/6. Functionally, involved in the biosynthesis of isopentenyl diphosphate (IPP) and dimethylallyl diphosphate (DMAPP), two major building blocks of isoprenoid compounds. Catalyzes the conversion of 4-diphosphocytidyl-2-C-methyl-D-erythritol 2-phosphate (CDP-ME2P) to 2-C-methyl-D-erythritol 2,4-cyclodiphosphate (ME-CPP) with a corresponding release of cytidine 5-monophosphate (CMP). This chain is 2-C-methyl-D-erythritol 2,4-cyclodiphosphate synthase, found in Bacillus cereus (strain B4264).